Here is a 218-residue protein sequence, read N- to C-terminus: Outer-membrane lipoprotein LolB (218 aa).

An N-terminal signal peptide occupies residues 1 to 20 (MSQVIRTLALTGLALAGLSG). C21 carries N-palmitoyl cysteine lipidation. A lipid anchor (S-diacylglycerol cysteine) is attached at C21.

Belongs to the LolB family. Monomer.

The protein resides in the cell outer membrane. Plays a critical role in the incorporation of lipoproteins in the outer membrane after they are released by the LolA protein. This is Outer-membrane lipoprotein LolB from Xanthomonas campestris pv. campestris (strain B100).